We begin with the raw amino-acid sequence, 33 residues long: uncharacterized protein (33 aa).

Its subcellular location is the cytoplasm. The protein resides in the nucleus. This is an uncharacterized protein from Schizosaccharomyces pombe (strain 972 / ATCC 24843) (Fission yeast).